We begin with the raw amino-acid sequence, 396 residues long: Deoxyuridine 5'-triphosphate nucleotidohydrolase (396 aa).

Substrate contacts are provided by residues 280–282 and 380–381; these read RSS and FG.

It belongs to the dUTPase family. The cofactor is Mg(2+).

The catalysed reaction is dUTP + H2O = dUMP + diphosphate + H(+). Involved in nucleotide metabolism: produces dUMP, the immediate precursor of thymidine nucleotides and decreases the intracellular concentration of dUTP to avoid uracil incorporation into viral DNA. This chain is Deoxyuridine 5'-triphosphate nucleotidohydrolase, found in Homo sapiens (Human).